Here is a 219-residue protein sequence, read N- to C-terminus: 7-cyano-7-deazaguanine synthase (219 aa).

Position 10-20 (10-20 (FSGGQDSTTCL)) interacts with ATP. Cys-188, Cys-197, Cys-200, and Cys-203 together coordinate Zn(2+).

Belongs to the QueC family. It depends on Zn(2+) as a cofactor.

The enzyme catalyses 7-carboxy-7-deazaguanine + NH4(+) + ATP = 7-cyano-7-deazaguanine + ADP + phosphate + H2O + H(+). The protein operates within purine metabolism; 7-cyano-7-deazaguanine biosynthesis. Its function is as follows. Catalyzes the ATP-dependent conversion of 7-carboxy-7-deazaguanine (CDG) to 7-cyano-7-deazaguanine (preQ(0)). The polypeptide is 7-cyano-7-deazaguanine synthase (Bacteroides fragilis (strain ATCC 25285 / DSM 2151 / CCUG 4856 / JCM 11019 / LMG 10263 / NCTC 9343 / Onslow / VPI 2553 / EN-2)).